Reading from the N-terminus, the 343-residue chain is Probable dual-specificity RNA methyltransferase RlmN (343 aa).

The Proton acceptor role is filled by E91. One can recognise a Radical SAM core domain in the interval 97 to 326 (HPDRITACIS…AEIRREKGSD (230 aa)). The cysteines at positions 104 and 331 are disulfide-linked. [4Fe-4S] cluster-binding residues include C111, C115, and C118. Residues 158–159 (GE), S190, 213–215 (SLH), and N289 each bind S-adenosyl-L-methionine. C331 functions as the S-methylcysteine intermediate in the catalytic mechanism.

The protein belongs to the radical SAM superfamily. RlmN family. It depends on [4Fe-4S] cluster as a cofactor.

Its subcellular location is the cytoplasm. It carries out the reaction adenosine(2503) in 23S rRNA + 2 reduced [2Fe-2S]-[ferredoxin] + 2 S-adenosyl-L-methionine = 2-methyladenosine(2503) in 23S rRNA + 5'-deoxyadenosine + L-methionine + 2 oxidized [2Fe-2S]-[ferredoxin] + S-adenosyl-L-homocysteine. The catalysed reaction is adenosine(37) in tRNA + 2 reduced [2Fe-2S]-[ferredoxin] + 2 S-adenosyl-L-methionine = 2-methyladenosine(37) in tRNA + 5'-deoxyadenosine + L-methionine + 2 oxidized [2Fe-2S]-[ferredoxin] + S-adenosyl-L-homocysteine. Specifically methylates position 2 of adenine 2503 in 23S rRNA and position 2 of adenine 37 in tRNAs. This chain is Probable dual-specificity RNA methyltransferase RlmN, found in Thermotoga sp. (strain RQ2).